The chain runs to 224 residues: Cerebellin-2 (224 aa).

The N-terminal stretch at 1 to 51 (MQAPGRGPLGLRLMMPGRRGALREPGGCGSCLGVALALLLLLLPACCPVRA) is a signal peptide. Residues Asn-53 and Asn-110 are each glycosylated (N-linked (GlcNAc...) asparagine). The C1q domain occupies 88 to 224 (SGSAKVAFSA…TFSGFLVFPL (137 aa)).

As to quaternary structure, homohexamer; disulfide-linked homotrimers. The trimers are assembled via the globular C1q domains. The trimers associate via N-terminal cysteine residues to form disulfide-linked hexamers. May form homooligomers or heterooligomers with CBLN1 and CBLN3 prior to secretion. Once secreted, does not interact with other CBLN family members. Interacts with GRID2, and more weakly with GRID1. Interacts with NRXN1 and NRXN2 long and short isoforms produced by alternative promoter usage. Weakly interacts with NRXN3 short isoform and not at all with NRXN3 long isoform.

It is found in the secreted. Functionally, acts as a synaptic organizer in specific subsets of neurons in the brain. Essential for long-term maintenance but not establishment of excitatory synapses. Functions as part of a trans-synaptic complex by binding to postsynaptic GRID1 and presynaptic neurexins. This interaction helps regulate the activity of NMDA and AMPA receptors at hippocampal synapses without affecting synapse formation. NRXN1B-CBLN2-GRID1 complex transduce presynaptic signals into postsynaptic NMDAR response. NRXN3B-CBLN2-GRID1 complex transduce presynaptic signals into postsynaptic AMPAR response. This chain is Cerebellin-2, found in Homo sapiens (Human).